The following is a 427-amino-acid chain: Citrate synthase (427 aa).

Residues histidine 306 and aspartate 363 contribute to the active site.

It belongs to the citrate synthase family. As to quaternary structure, homohexamer.

The enzyme catalyses oxaloacetate + acetyl-CoA + H2O = citrate + CoA + H(+). It functions in the pathway carbohydrate metabolism; tricarboxylic acid cycle; isocitrate from oxaloacetate: step 1/2. Its activity is regulated as follows. Allosterically inhibited by NADH. This Salmonella typhimurium (strain LT2 / SGSC1412 / ATCC 700720) protein is Citrate synthase (gltA).